The chain runs to 135 residues: Large ribosomal subunit protein eL27y (135 aa).

This sequence belongs to the eukaryotic ribosomal protein eL27 family.

The chain is Large ribosomal subunit protein eL27y (RPL27B) from Arabidopsis thaliana (Mouse-ear cress).